A 98-amino-acid chain; its full sequence is Large ribosomal subunit protein uL23 (98 aa).

It belongs to the universal ribosomal protein uL23 family. In terms of assembly, part of the 50S ribosomal subunit. Contacts protein L29, and trigger factor when it is bound to the ribosome.

In terms of biological role, one of the early assembly proteins it binds 23S rRNA. One of the proteins that surrounds the polypeptide exit tunnel on the outside of the ribosome. Forms the main docking site for trigger factor binding to the ribosome. This chain is Large ribosomal subunit protein uL23, found in Rickettsia bellii (strain OSU 85-389).